The chain runs to 869 residues: NACHT, LRR and PYD domains-containing protein 6 (869 aa).

The 92-residue stretch at 37 to 128 (KLRDAPLDGR…REHVLRQHAK (92 aa)) folds into the Pyrin domain. The region spanning 194 to 511 (LTVVLQGPAG…EFLAALSYLL (318 aa)) is the NACHT domain. Residue 200-207 (GPAGIGKT) coordinates ATP. The disordered stretch occupies residues 350–354 (KDKKK). The LRR 1 repeat unit spans residues 460–485 (EEDLEKLKLRGSQVQTIFLNKKEIPG). The disordered stretch occupies residues 577–608 (VQGQSHPKGPPVGAKKTAELEDIEDAEEEEEE). Over residues 596–608 (LEDIEDAEEEEEE) the composition is skewed to acidic residues. LRR repeat units lie at residues 635 to 658 (LSSLPEIVLERVRLTRMDLEVLNY) and 837 to 860 (TLSLTSVELSENSLRDLQAVKTSK).

Belongs to the NLRP family. As to quaternary structure, homomultimer; forms the NLRP6 inflammasome polymeric complex, a filament composed of homopolymers in response to pathogens and other damage-associated signals. The core of NLRP6 inflammasomes consists of a signal sensor component (NLRP6), an adapter (PYCARD/ASC), which recruits effector pro-inflammatory caspases (CASP1 and CASP4). Interacts (via pyrin domain) with PYCARD/ASC (via pyrin domain); interaction takes place following NLRP6 activation and formation of liquid-liquid phase separation (LLPS), initiating nucleation which greatly enhances further addition of soluble PYCARD/ASC molecules to the speck in a prion-like polymerization process. Clustered PYCARD/ASC nucleates the formation of CASP1 (or possibly CASP4) filaments through the interaction of their respective CARD domains, acting as a platform for CASP1 polymerization. CASP1 filament formation increases local enzyme concentration, resulting in trans-autocleavage and activation. Active CASP1 then processes IL1B and IL18 precursors, leading to the release of mature cytokines in the extracellular milieu and inflammatory response. Interacts with DHX15. Post-translationally, polyubiquitinated with 'Lys-63'-linked chains, promoting the interaction with PYCARD/ASC and formation of the NLRP6 inflammasome. Deubiquitination by CYLD decreases the interaction with PYCARD/ASC. In terms of tissue distribution, highly expressed in the gastrointestinal tract, predominantly in colonic myofibroblasts and in colonic epithelial and endothelial cells. Within the intestinal mucosa, highly expressed by goblet cells. Also expressed in hepatocytes and in immune cells, including CD4(+) and CD8(+) T-cells, dendritic cells, mastocytes and peritoneal macrophages, as well as in lung, kidney, bladder and gonads.

It is found in the cytoplasm. The protein localises to the inflammasome. The protein resides in the cell membrane. It localises to the nucleus membrane. Acts as the sensor component of the NLRP6 inflammasome, which mediates inflammasome activation in response to various pathogen-associated signals, leading to maturation and secretion of IL1B and IL18. Inflammasomes are supramolecular complexes that assemble in the cytosol in response to pathogens and other damage-associated signals and play critical roles in innate immunity and inflammation. Acts as a recognition receptor (PRR): recognizes and binds specific pathogens and other damage-associated signals, such as lipoteichoic acid (LTA), a cell-wall component of Gram-positive bacteria, or double stranded RNA (dsRNA). May also recognize and bind lipopolysaccharide (LPS), a major component of the outer membrane of Gram-negative bacteria; however, LPS is probably not a major activator of the NLRP6 inflammasome. Following LTA- or dsRNA-binding, NLRP6 undergoes liquid-liquid phase separation (LLPS), enhancing multivalent interactions, an essential step for the formation of the NLRP6 inflammasome polymeric complex. The NLRP6 inflammasome acts by promoting recruitment of effector pro-inflammatory caspases (CASP1 and/or CASP4) that catalyze maturation and secretion of IL1B and IL18 in the extracellular milieu. The NLRP6 inflammasome plays a central role in the maintenance of epithelial integrity and host defense against microbial infections in the intestine. Required to restrict infection against Gram-positive bacteria by recognizing lipoteichoic acid (LTA), leading to recruitment of CASP4 and CASP1, and subsequent maturation and secretion of IL1B and IL18. Involved in intestinal antiviral innate immunity together with DHX15: recognizes and binds viral dsRNA to restrict infection by enteric viruses through the interferon pathway and GSDMD-dependent release of IL18. Required to prevent infection by the apicomplexan parasite C.tyzzeri in enterocytes by promoting GSDMD-dependent release of IL18. The NLRP6 inflammasome may also regulate the gut microbiota composition by acting as a sensor of microbiota-associated metabolites to form a PYCARD/ASC-dependent inflammasome for downstream IL18 release and secretion of antimicrobial peptides. Its role in the regulation of the gut microbiota composition is however subject to discussion. Essential for gut mucosal self-renewal and proliferation. Regulate mucus secretion in an inflammasome- and autophagy-dependent manner to prevent invasion by enteric bacteria. During systemic bacterial infections, the NLRP6 inflammasome negatively regulates neutrophil recruitment and neutrophil extracellular traps (NETs) formation. May promote peripheral nerve recovery following injury via an inflammasome-independent mechanism. The chain is NACHT, LRR and PYD domains-containing protein 6 from Mus musculus (Mouse).